We begin with the raw amino-acid sequence, 251 residues long: uncharacterized protein (251 aa).

This sequence to M.jannaschii MJ1311.

This is an uncharacterized protein from Methanocaldococcus jannaschii (strain ATCC 43067 / DSM 2661 / JAL-1 / JCM 10045 / NBRC 100440) (Methanococcus jannaschii).